We begin with the raw amino-acid sequence, 346 residues long: Tryptophan--tRNA ligase (346 aa).

ATP contacts are provided by residues 21-23 (QPT) and 30-31 (GN). Positions 22–31 (PTADSYHLGN) match the 'HIGH' region motif. D147 provides a ligand contact to L-tryptophan. ATP contacts are provided by residues 159-161 (GED), I198, and 207-211 (KMSKS). Positions 207 to 211 (KMSKS) match the 'KMSKS' region motif.

It belongs to the class-I aminoacyl-tRNA synthetase family. Homodimer.

The protein localises to the cytoplasm. It carries out the reaction tRNA(Trp) + L-tryptophan + ATP = L-tryptophyl-tRNA(Trp) + AMP + diphosphate + H(+). Functionally, catalyzes the attachment of tryptophan to tRNA(Trp). The sequence is that of Tryptophan--tRNA ligase from Corynebacterium efficiens (strain DSM 44549 / YS-314 / AJ 12310 / JCM 11189 / NBRC 100395).